The sequence spans 95 residues: Aspartyl/glutamyl-tRNA(Asn/Gln) amidotransferase subunit C (95 aa).

It belongs to the GatC family. In terms of assembly, heterotrimer of A, B and C subunits.

The catalysed reaction is L-glutamyl-tRNA(Gln) + L-glutamine + ATP + H2O = L-glutaminyl-tRNA(Gln) + L-glutamate + ADP + phosphate + H(+). It catalyses the reaction L-aspartyl-tRNA(Asn) + L-glutamine + ATP + H2O = L-asparaginyl-tRNA(Asn) + L-glutamate + ADP + phosphate + 2 H(+). Allows the formation of correctly charged Asn-tRNA(Asn) or Gln-tRNA(Gln) through the transamidation of misacylated Asp-tRNA(Asn) or Glu-tRNA(Gln) in organisms which lack either or both of asparaginyl-tRNA or glutaminyl-tRNA synthetases. The reaction takes place in the presence of glutamine and ATP through an activated phospho-Asp-tRNA(Asn) or phospho-Glu-tRNA(Gln). The chain is Aspartyl/glutamyl-tRNA(Asn/Gln) amidotransferase subunit C from Trichlorobacter lovleyi (strain ATCC BAA-1151 / DSM 17278 / SZ) (Geobacter lovleyi).